The chain runs to 625 residues: Endoglucanase 13 (625 aa).

Positions 1-34 are cleaved as a signal peptide; it reads MAATMNKTPATTFLLIPAAASLVLLLAAAASVEA. Catalysis depends on aspartate 91, which acts as the Nucleophile. The active site involves histidine 427. N-linked (GlcNAc...) asparagine glycosylation occurs at asparagine 440. Active-site residues include aspartate 479 and glutamate 488. The segment at 509–530 is disordered; it reads ADNTPEYTPAPNAPSPSNGGSP.

The protein belongs to the glycosyl hydrolase 9 (cellulase E) family. In terms of tissue distribution, expressed in roots and flowers.

It is found in the secreted. It carries out the reaction Endohydrolysis of (1-&gt;4)-beta-D-glucosidic linkages in cellulose, lichenin and cereal beta-D-glucans.. In Oryza sativa subsp. japonica (Rice), this protein is Endoglucanase 13 (GLU6).